We begin with the raw amino-acid sequence, 340 residues long: Phosphate acyltransferase (340 aa).

The protein belongs to the PlsX family. In terms of assembly, homodimer. Probably interacts with PlsY.

The protein resides in the cytoplasm. It carries out the reaction a fatty acyl-[ACP] + phosphate = an acyl phosphate + holo-[ACP]. Its pathway is lipid metabolism; phospholipid metabolism. Its function is as follows. Catalyzes the reversible formation of acyl-phosphate (acyl-PO(4)) from acyl-[acyl-carrier-protein] (acyl-ACP). This enzyme utilizes acyl-ACP as fatty acyl donor, but not acyl-CoA. This Clostridioides difficile (strain 630) (Peptoclostridium difficile) protein is Phosphate acyltransferase.